A 236-amino-acid chain; its full sequence is GTP cyclohydrolase 1 (236 aa).

Residues 1-52 (MAAARSCNGYARREGPPSPKLGTEKPRVSAGSGGSGDGWRGERPRSEEDNEL) are disordered. 3 residues coordinate Zn(2+): Cys-127, His-130, and Cys-198.

The protein belongs to the GTP cyclohydrolase I family. As to quaternary structure, toroid-shaped homodecamer, composed of two pentamers of five dimers.

The protein localises to the cytoplasm. It is found in the nucleus. It carries out the reaction GTP + H2O = 7,8-dihydroneopterin 3'-triphosphate + formate + H(+). It functions in the pathway cofactor biosynthesis; 7,8-dihydroneopterin triphosphate biosynthesis; 7,8-dihydroneopterin triphosphate from GTP: step 1/1. Its activity is regulated as follows. GTP shows a positive allosteric effect, and tetrahydrobiopterin inhibits the enzyme activity. Zinc is required for catalytic activity. Inhibited by Mg(2+). May positively regulate nitric oxide synthesis in endothelial cells. May be involved in dopamine synthesis. May modify pain sensitivity and persistence. This Gallus gallus (Chicken) protein is GTP cyclohydrolase 1 (GCH1).